Consider the following 612-residue polypeptide: Dihydroxy-acid dehydratase (612 aa).

Residue D81 participates in Mg(2+) binding. C122 is a [2Fe-2S] cluster binding site. Residues D123 and K124 each coordinate Mg(2+). K124 bears the N6-carboxylysine mark. [2Fe-2S] cluster is bound at residue C195. E491 lines the Mg(2+) pocket. S517 serves as the catalytic Proton acceptor.

Belongs to the IlvD/Edd family. As to quaternary structure, homodimer. [2Fe-2S] cluster serves as cofactor. The cofactor is Mg(2+).

It catalyses the reaction (2R)-2,3-dihydroxy-3-methylbutanoate = 3-methyl-2-oxobutanoate + H2O. The catalysed reaction is (2R,3R)-2,3-dihydroxy-3-methylpentanoate = (S)-3-methyl-2-oxopentanoate + H2O. Its pathway is amino-acid biosynthesis; L-isoleucine biosynthesis; L-isoleucine from 2-oxobutanoate: step 3/4. It functions in the pathway amino-acid biosynthesis; L-valine biosynthesis; L-valine from pyruvate: step 3/4. Its function is as follows. Functions in the biosynthesis of branched-chain amino acids. Catalyzes the dehydration of (2R,3R)-2,3-dihydroxy-3-methylpentanoate (2,3-dihydroxy-3-methylvalerate) into 2-oxo-3-methylpentanoate (2-oxo-3-methylvalerate) and of (2R)-2,3-dihydroxy-3-methylbutanoate (2,3-dihydroxyisovalerate) into 2-oxo-3-methylbutanoate (2-oxoisovalerate), the penultimate precursor to L-isoleucine and L-valine, respectively. The polypeptide is Dihydroxy-acid dehydratase (Haemophilus influenzae (strain 86-028NP)).